Here is a 127-residue protein sequence, read N- to C-terminus: Large-conductance mechanosensitive channel (127 aa).

The next 3 membrane-spanning stretches (helical) occupy residues E9 to F29, I32 to I52, and V75 to L95.

The protein belongs to the MscL family. As to quaternary structure, homopentamer.

Its subcellular location is the cell inner membrane. In terms of biological role, channel that opens in response to stretch forces in the membrane lipid bilayer. May participate in the regulation of osmotic pressure changes within the cell. The protein is Large-conductance mechanosensitive channel of Legionella pneumophila subsp. pneumophila (strain Philadelphia 1 / ATCC 33152 / DSM 7513).